We begin with the raw amino-acid sequence, 292 residues long: Bifunctional protein FolD (292 aa).

NADP(+) contacts are provided by residues 166–168, Ser-191, and Ile-232; that span reads GRS.

The protein belongs to the tetrahydrofolate dehydrogenase/cyclohydrolase family. As to quaternary structure, homodimer.

It carries out the reaction (6R)-5,10-methylene-5,6,7,8-tetrahydrofolate + NADP(+) = (6R)-5,10-methenyltetrahydrofolate + NADPH. The enzyme catalyses (6R)-5,10-methenyltetrahydrofolate + H2O = (6R)-10-formyltetrahydrofolate + H(+). The protein operates within one-carbon metabolism; tetrahydrofolate interconversion. In terms of biological role, catalyzes the oxidation of 5,10-methylenetetrahydrofolate to 5,10-methenyltetrahydrofolate and then the hydrolysis of 5,10-methenyltetrahydrofolate to 10-formyltetrahydrofolate. This is Bifunctional protein FolD from Wolbachia sp. subsp. Drosophila simulans (strain wRi).